A 134-amino-acid polypeptide reads, in one-letter code: MARVKRGVTSHAKHKKTLKAAKGFYGRRKNTIRAAKAAVDRSKQFAYRDRKVNKRNFRALWIQRINAAVREFGLTYGRFIDGLNKAGIEVDRKVLSDMAIHEPAAFGALVEASKKALAYLKEAGTANEFESAVR.

The protein belongs to the bacterial ribosomal protein bL20 family.

In terms of biological role, binds directly to 23S ribosomal RNA and is necessary for the in vitro assembly process of the 50S ribosomal subunit. It is not involved in the protein synthesizing functions of that subunit. This is Large ribosomal subunit protein bL20 from Rhizobium meliloti (strain 1021) (Ensifer meliloti).